Here is an 876-residue protein sequence, read N- to C-terminus: DDB1- and CUL4-associated factor 6 (876 aa).

WD repeat units lie at residues 49–88 (VHDG…VLTT), 92–133 (GHRA…ETNR), 139–179 (CHYG…SCTK), 189–229 (NCRR…TRAT), and 251–290 (NKSC…AREL). Composition is skewed to basic and acidic residues over residues 288–303 (RELK…EELR) and 312–334 (LRGD…RDGE). 5 disordered regions span residues 288–340 (RELK…PNVS), 355–391 (EASE…SSPN), 408–485 (LQPS…TEGT), 498–645 (WSST…NPEL), and 658–691 (EDPS…GPGD). Ser-336 carries the post-translational modification Phosphoserine. Composition is skewed to polar residues over residues 375-391 (TNQP…SSPN) and 409-422 (QPST…QAQA). Residues 456–466 (HQSDNSNERLS) are compositionally biased toward basic and acidic residues. The segment covering 499 to 510 (SSTASSSRGNGS) has biased composition (low complexity). The span at 534–544 (SETRAPEELSE) shows a compositional bias: basic and acidic residues. Composition is skewed to polar residues over residues 550 to 562 (ENLT…TAQL), 571 to 584 (DSNS…SQDS), 603 to 613 (EQASTESATRH), and 621 to 645 (PSQT…NPEL). The residue at position 665 (Ser-665) is a Phosphoserine. Thr-670 carries the phosphothreonine modification. Ser-673 carries the post-translational modification Phosphoserine. In terms of domain architecture, IQ spans 692-721 (RRSAVARIQEFFRRRKERKEMEELDTLNIR). 2 WD repeats span residues 734–772 (NSRT…HLML) and 775–814 (ADNH…RIFN). Phosphoserine is present on residues Ser-863 and Ser-866.

As to quaternary structure, interacts with the nuclear receptors NR3C1 and AR in the presence of ligand. Interacts with DDB1, CUL4A and CUL4B.

The protein resides in the nucleus. It participates in protein modification; protein ubiquitination. Its function is as follows. Ligand-dependent coactivator of nuclear receptors. Enhance transcriptional activity of the nuclear receptors NR3C1 and AR. May function as a substrate receptor for CUL4-DDB1 E3 ubiquitin-protein ligase complex. This is DDB1- and CUL4-associated factor 6 (Dcaf6) from Mus musculus (Mouse).